A 68-amino-acid chain; its full sequence is Protein SlyX homolog (68 aa).

It belongs to the SlyX family.

This Pseudomonas putida (strain ATCC 700007 / DSM 6899 / JCM 31910 / BCRC 17059 / LMG 24140 / F1) protein is Protein SlyX homolog.